Reading from the N-terminus, the 319-residue chain is ATP-dependent 6-phosphofructokinase (319 aa).

Residue G11 participates in ATP binding. 21–25 (RAVVR) lines the ADP pocket. Residues 72–73 (RC) and 102–105 (GDGS) each bind ATP. Position 103 (D103) interacts with Mg(2+). 125–127 (TID) is a binding site for substrate. D127 (proton acceptor) is an active-site residue. R154 contacts ADP. Substrate is bound by residues R162 and 169-171 (MGR). ADP contacts are provided by residues 185 to 187 (GAE), R211, and 213 to 215 (KKH). Substrate-binding positions include E222, R243, and 249–252 (HIQR).

The protein belongs to the phosphofructokinase type A (PFKA) family. ATP-dependent PFK group I subfamily. Prokaryotic clade 'B1' sub-subfamily. In terms of assembly, homotetramer. The cofactor is Mg(2+).

Its subcellular location is the cytoplasm. The enzyme catalyses beta-D-fructose 6-phosphate + ATP = beta-D-fructose 1,6-bisphosphate + ADP + H(+). The protein operates within carbohydrate degradation; glycolysis; D-glyceraldehyde 3-phosphate and glycerone phosphate from D-glucose: step 3/4. Allosterically activated by ADP and other diphosphonucleosides, and allosterically inhibited by phosphoenolpyruvate. Functionally, catalyzes the phosphorylation of D-fructose 6-phosphate to fructose 1,6-bisphosphate by ATP, the first committing step of glycolysis. This chain is ATP-dependent 6-phosphofructokinase, found in Bacillus licheniformis (strain ATCC 14580 / DSM 13 / JCM 2505 / CCUG 7422 / NBRC 12200 / NCIMB 9375 / NCTC 10341 / NRRL NRS-1264 / Gibson 46).